The following is a 216-amino-acid chain: Acyl-homoserine-lactone synthase (216 aa).

Belongs to the autoinducer synthase family.

The enzyme catalyses a fatty acyl-[ACP] + S-adenosyl-L-methionine = an N-acyl-L-homoserine lactone + S-methyl-5'-thioadenosine + holo-[ACP] + H(+). In terms of biological role, required for the synthesis of OHHL (N-(3-oxohexanoyl)-L-homoserine lactone), an autoinducer molecule which binds to a yet uncharacterized transcriptional regulator. The polypeptide is Acyl-homoserine-lactone synthase (eagI) (Enterobacter agglomerans (Erwinia herbicola)).